The primary structure comprises 173 residues: 6,7-dimethyl-8-ribityllumazine synthase (173 aa).

5-amino-6-(D-ribitylamino)uracil-binding positions include F24, 58-60 (ALE), and 82-84 (AVI). 87–88 (ET) serves as a coordination point for (2S)-2-hydroxy-3-oxobutyl phosphate. The Proton donor role is filled by H90. 5-amino-6-(D-ribitylamino)uracil is bound at residue N115. Residue R129 participates in (2S)-2-hydroxy-3-oxobutyl phosphate binding. A disordered region spans residues 150–173 (TLDQLSDDEEDEEDEDDEDEEERA). Positions 154-173 (LSDDEEDEEDEDDEDEEERA) are enriched in acidic residues.

This sequence belongs to the DMRL synthase family.

It carries out the reaction (2S)-2-hydroxy-3-oxobutyl phosphate + 5-amino-6-(D-ribitylamino)uracil = 6,7-dimethyl-8-(1-D-ribityl)lumazine + phosphate + 2 H2O + H(+). It functions in the pathway cofactor biosynthesis; riboflavin biosynthesis; riboflavin from 2-hydroxy-3-oxobutyl phosphate and 5-amino-6-(D-ribitylamino)uracil: step 1/2. Catalyzes the formation of 6,7-dimethyl-8-ribityllumazine by condensation of 5-amino-6-(D-ribitylamino)uracil with 3,4-dihydroxy-2-butanone 4-phosphate. This is the penultimate step in the biosynthesis of riboflavin. This Burkholderia mallei (strain NCTC 10247) protein is 6,7-dimethyl-8-ribityllumazine synthase.